Here is a 183-residue protein sequence, read N- to C-terminus: Photosystem I assembly protein Ycf4 (183 aa).

2 consecutive transmembrane segments (helical) span residues 21–43 (YIWG…SSYL) and 63–85 (LVMC…LILW).

This sequence belongs to the Ycf4 family.

It is found in the plastid. The protein localises to the chloroplast thylakoid membrane. Seems to be required for the assembly of the photosystem I complex. This Chlorella vulgaris (Green alga) protein is Photosystem I assembly protein Ycf4.